We begin with the raw amino-acid sequence, 150 residues long: Globin (150 aa).

A Globin domain is found at 11-150 (PLSAAEKTKI…MICILLRSAY (140 aa)). 2 residues coordinate heme b: H74 and H106.

The protein belongs to the globin family. Monomer.

This chain is Globin, found in Lampetra fluviatilis (European river lamprey).